The primary structure comprises 109 residues: Large ribosomal subunit protein uL24 (109 aa).

Positions 1 to 24 are disordered; it reads MANVTTDIKRNDTVAVTSGKDKGK.

It belongs to the universal ribosomal protein uL24 family. In terms of assembly, part of the 50S ribosomal subunit.

Functionally, one of two assembly initiator proteins, it binds directly to the 5'-end of the 23S rRNA, where it nucleates assembly of the 50S subunit. In terms of biological role, one of the proteins that surrounds the polypeptide exit tunnel on the outside of the subunit. The polypeptide is Large ribosomal subunit protein uL24 (Koribacter versatilis (strain Ellin345)).